A 147-amino-acid chain; its full sequence is Hemoglobin subunit epsilon (147 aa).

The Globin domain maps to 3–147 (HFTAEEKAAI…VAIALGHKYH (145 aa)). Ser-14 and Ser-51 each carry phosphoserine. 2 residues coordinate heme b: His-64 and His-93.

Belongs to the globin family. As to quaternary structure, heterotetramer of two alpha chains and two epsilon chains in early embryonic hemoglobin Gower-2; two zeta chains and two epsilon chains in early embryonic hemoglobin Gower-1. As to expression, red blood cells.

Functionally, the epsilon chain is a beta-type chain of early mammalian embryonic hemoglobin. The sequence is that of Hemoglobin subunit epsilon (HBE1) from Callithrix jacchus (White-tufted-ear marmoset).